Reading from the N-terminus, the 120-residue chain is NAD(P)H-quinone oxidoreductase subunit 3, chloroplastic (120 aa).

The next 3 membrane-spanning stretches (helical) occupy residues 7–27 (YNYF…AFSI), 64–84 (MFAL…PWAM), and 89–109 (LGIP…IGLI).

It belongs to the complex I subunit 3 family. In terms of assembly, NDH is composed of at least 16 different subunits, 5 of which are encoded in the nucleus.

It localises to the plastid. Its subcellular location is the chloroplast thylakoid membrane. The enzyme catalyses a plastoquinone + NADH + (n+1) H(+)(in) = a plastoquinol + NAD(+) + n H(+)(out). It carries out the reaction a plastoquinone + NADPH + (n+1) H(+)(in) = a plastoquinol + NADP(+) + n H(+)(out). Its function is as follows. NDH shuttles electrons from NAD(P)H:plastoquinone, via FMN and iron-sulfur (Fe-S) centers, to quinones in the photosynthetic chain and possibly in a chloroplast respiratory chain. The immediate electron acceptor for the enzyme in this species is believed to be plastoquinone. Couples the redox reaction to proton translocation, and thus conserves the redox energy in a proton gradient. The sequence is that of NAD(P)H-quinone oxidoreductase subunit 3, chloroplastic from Anthoceros angustus (Hornwort).